We begin with the raw amino-acid sequence, 778 residues long: Aerobic respiration control sensor protein ArcB (778 aa).

The Cytoplasmic segment spans residues 1–25; that stretch reads MKQIRLLAQYYVDLMMKLGLVRFSM. A helical membrane pass occupies residues 26–46; it reads LLALALVVLAIVVQMAVTMVL. Residues 47-57 are Periplasmic-facing; the sequence is HGQVESIDVIR. Residues 58-78 form a helical membrane-spanning segment; that stretch reads SIFFGLLITPWAVYFLSVVVE. Topologically, residues 79–778 are cytoplasmic; it reads QLEESRQRLS…KAWVAKATKK (700 aa). Residues 153–223 enclose the PAS domain; sequence QSSFLRSFLD…ETDEKVFRHN (71 aa). The PAC domain maps to 226-278; the sequence is LTYEQWLDYPDGRKACFEIRKVPYYDRVGKRHGLMGFGRDITERKRYQDALER. The 219-residue stretch at 289–507 folds into the Histidine kinase domain; the sequence is TISHELRTPL…TFTLTIHAPS (219 aa). H292 is subject to Phosphohistidine; by autocatalysis. Residues 527 to 643 form the Response regulatory domain; the sequence is NVLLVEDIEL…ALTAMIKKFW (117 aa). D576 carries the 4-aspartylphosphate modification. The HPt domain occupies 678–771; it reads GPKLITDGLA…RHDVEVLKAW (94 aa). H717 carries the phosphohistidine modification.

Post-translationally, activation requires a sequential transfer of a phosphate group from a His in the primary transmitter domain, to an Asp in the receiver domain and to a His in the secondary transmitter domain.

The protein resides in the cell inner membrane. It catalyses the reaction ATP + protein L-histidine = ADP + protein N-phospho-L-histidine.. Member of the two-component regulatory system ArcB/ArcA. Sensor-regulator protein for anaerobic repression of the arc modulon. Activates ArcA via a four-step phosphorelay. ArcB can also dephosphorylate ArcA by a reverse phosphorelay involving His-717 and Asp-576. The sequence is that of Aerobic respiration control sensor protein ArcB (arcB) from Escherichia coli (strain K12).